A 133-amino-acid polypeptide reads, in one-letter code: Salmonella pathogenicity island 2 protein C (133 aa).

In terms of assembly, interacts with the mammalian NIPSNAP3A and HOOK3 proteins in infected cells.

Its subcellular location is the secreted. It is found in the cytoplasm. Its function is as follows. Virulence protein that plays a central role in mammalian macrophage infection, by inhibiting phagosome-lysosome fusion and cellular trafficking, including trafficking of organelles that are devoid of Salmonella. May act by disrupting the function of the mammalian HOOK3 protein, a protein involved in the cellular traffic. Also required for actin ADP-ribosylase SpvB activity. The sequence is that of Salmonella pathogenicity island 2 protein C (spiC) from Salmonella typhimurium (strain 14028s / SGSC 2262).